Here is a 198-residue protein sequence, read N- to C-terminus: HTH-type transcriptional regulator BetI (198 aa).

Residues 8-68 (PLRRRELIDA…ATMRHLLREL (61 aa)) enclose the HTH tetR-type domain. Residues 31-50 (TVAQIAHEAGVSPALAHHYF) constitute a DNA-binding region (H-T-H motif).

It functions in the pathway amine and polyamine biosynthesis; betaine biosynthesis via choline pathway [regulation]. In terms of biological role, repressor involved in the biosynthesis of the osmoprotectant glycine betaine. It represses transcription of the choline transporter BetT and the genes of BetAB involved in the synthesis of glycine betaine. This Brucella canis (strain ATCC 23365 / NCTC 10854 / RM-666) protein is HTH-type transcriptional regulator BetI.